Here is a 431-residue protein sequence, read N- to C-terminus: Glutamate-1-semialdehyde 2,1-aminomutase (431 aa).

Residue lysine 269 is modified to N6-(pyridoxal phosphate)lysine.

It belongs to the class-III pyridoxal-phosphate-dependent aminotransferase family. HemL subfamily. As to quaternary structure, homodimer. Pyridoxal 5'-phosphate serves as cofactor.

Its subcellular location is the cytoplasm. The enzyme catalyses (S)-4-amino-5-oxopentanoate = 5-aminolevulinate. It functions in the pathway porphyrin-containing compound metabolism; protoporphyrin-IX biosynthesis; 5-aminolevulinate from L-glutamyl-tRNA(Glu): step 2/2. Its pathway is porphyrin-containing compound metabolism; chlorophyll biosynthesis. The protein is Glutamate-1-semialdehyde 2,1-aminomutase of Chlorobaculum parvum (strain DSM 263 / NCIMB 8327) (Chlorobium vibrioforme subsp. thiosulfatophilum).